Consider the following 659-residue polypeptide: Acetyl-coenzyme A synthetase (659 aa).

CoA-binding positions include 206–209 (RRGK) and T324. ATP contacts are provided by residues 400–402 (GEP), 424–429 (DTWWQT), D516, R531, and R542. The Mg(2+) site is built by V553 and H555. R600 contributes to the CoA binding site.

This sequence belongs to the ATP-dependent AMP-binding enzyme family. It depends on Mg(2+) as a cofactor.

It carries out the reaction acetate + ATP + CoA = acetyl-CoA + AMP + diphosphate. Its function is as follows. Catalyzes the conversion of acetate into acetyl-CoA (AcCoA), an essential intermediate at the junction of anabolic and catabolic pathways. AcsA undergoes a two-step reaction. In the first half reaction, AcsA combines acetate with ATP to form acetyl-adenylate (AcAMP) intermediate. In the second half reaction, it can then transfer the acetyl group from AcAMP to the sulfhydryl group of CoA, forming the product AcCoA. The protein is Acetyl-coenzyme A synthetase (acsA) of Methanothrix thermoacetophila (strain DSM 6194 / JCM 14653 / NBRC 101360 / PT) (Methanosaeta thermophila).